Reading from the N-terminus, the 662-residue chain is Glycogen debranching enzyme (662 aa).

Residue Asp338 is the Nucleophile of the active site. Glu373 functions as the Proton donor in the catalytic mechanism.

It belongs to the glycosyl hydrolase 13 family.

It carries out the reaction Hydrolysis of (1-&gt;6)-alpha-D-glucosidic linkages to branches with degrees of polymerization of three or four glucose residues in limit dextrin.. It participates in glycan degradation; glycogen degradation. In terms of biological role, removes maltotriose and maltotetraose chains that are attached by 1,6-alpha-linkage to the limit dextrin main chain, generating a debranched limit dextrin. The polypeptide is Glycogen debranching enzyme (Yersinia pestis bv. Antiqua (strain Angola)).